The following is a 325-amino-acid chain: NADH-quinone oxidoreductase subunit H (325 aa).

8 helical membrane-spanning segments follow: residues 11-31 (ILLTILKAVVILLVVVTCGAF), 81-101 (VIFTLAPMIAFTSLLLAFAIV), 114-134 (IGILFFLMMAGLAVYAVLFAG), 154-174 (LSYEVFLGLSLMGVVAQAGSF), 186-206 (VWNVIPQFFGFITFAIAGVAV), 237-257 (FFVGEYIGIVTISALMVTLFF), 265-285 (LPPFIWFALKTAFFMMMFILI), and 304-324 (ICLPLTLINLLVTAAVILWQA).

Belongs to the complex I subunit 1 family. In terms of assembly, NDH-1 is composed of 13 different subunits. Subunits NuoA, H, J, K, L, M, N constitute the membrane sector of the complex.

The protein localises to the cell inner membrane. The enzyme catalyses a quinone + NADH + 5 H(+)(in) = a quinol + NAD(+) + 4 H(+)(out). In terms of biological role, NDH-1 shuttles electrons from NADH, via FMN and iron-sulfur (Fe-S) centers, to quinones in the respiratory chain. The immediate electron acceptor for the enzyme in this species is believed to be ubiquinone. Couples the redox reaction to proton translocation (for every two electrons transferred, four hydrogen ions are translocated across the cytoplasmic membrane), and thus conserves the redox energy in a proton gradient. This subunit may bind ubiquinone. This chain is NADH-quinone oxidoreductase subunit H, found in Escherichia coli O139:H28 (strain E24377A / ETEC).